Reading from the N-terminus, the 150-residue chain is Ribosomal RNA large subunit methyltransferase H (150 aa).

S-adenosyl-L-methionine is bound by residues Ala100 and 118–123; that span reads LSEMTF.

The protein belongs to the RNA methyltransferase RlmH family. In terms of assembly, homodimer.

The protein localises to the cytoplasm. It carries out the reaction pseudouridine(1915) in 23S rRNA + S-adenosyl-L-methionine = N(3)-methylpseudouridine(1915) in 23S rRNA + S-adenosyl-L-homocysteine + H(+). In terms of biological role, specifically methylates the pseudouridine at position 1915 (m3Psi1915) in 23S rRNA. The protein is Ribosomal RNA large subunit methyltransferase H of Helicobacter pylori (strain Shi470).